Consider the following 154-residue polypeptide: Crossover junction endodeoxyribonuclease RuvC (154 aa).

Catalysis depends on residues D7, E67, and D139. Residues D7, E67, and D139 each contribute to the Mg(2+) site.

The protein belongs to the RuvC family. In terms of assembly, homodimer which binds Holliday junction (HJ) DNA. The HJ becomes 2-fold symmetrical on binding to RuvC with unstacked arms; it has a different conformation from HJ DNA in complex with RuvA. In the full resolvosome a probable DNA-RuvA(4)-RuvB(12)-RuvC(2) complex forms which resolves the HJ. Mg(2+) is required as a cofactor.

The protein localises to the cytoplasm. The enzyme catalyses Endonucleolytic cleavage at a junction such as a reciprocal single-stranded crossover between two homologous DNA duplexes (Holliday junction).. The RuvA-RuvB-RuvC complex processes Holliday junction (HJ) DNA during genetic recombination and DNA repair. Endonuclease that resolves HJ intermediates. Cleaves cruciform DNA by making single-stranded nicks across the HJ at symmetrical positions within the homologous arms, yielding a 5'-phosphate and a 3'-hydroxyl group; requires a central core of homology in the junction. The consensus cleavage sequence is 5'-(A/T)TT(C/G)-3'. Cleavage occurs on the 3'-side of the TT dinucleotide at the point of strand exchange. HJ branch migration catalyzed by RuvA-RuvB allows RuvC to scan DNA until it finds its consensus sequence, where it cleaves and resolves the cruciform DNA. The sequence is that of Crossover junction endodeoxyribonuclease RuvC from Prochlorococcus marinus (strain MIT 9303).